A 330-amino-acid polypeptide reads, in one-letter code: Flotillin-like protein FloA (330 aa).

The next 2 membrane-spanning stretches (helical) occupy residues 6–26 (LLLFVIIAAGLIVLSIFFTFV) and 28–48 (VMLWISALAAGVRVSIFTLVG).

This sequence belongs to the flotillin-like FloA family. As to quaternary structure, homooligomerizes.

The protein resides in the cell membrane. The protein localises to the membrane raft. Found in functional membrane microdomains (FMM) that may be equivalent to eukaryotic membrane rafts. FMMs are highly dynamic and increase in number as cells age. Flotillins are thought to be important factors in membrane fluidity. This is Flotillin-like protein FloA from Bacillus pumilus (strain SAFR-032).